The primary structure comprises 365 residues: Tubulin-like protein CetZ (365 aa).

Residues 10 to 14 (QCGGK), 103 to 105 (GTG), glutamate 136, asparagine 163, and asparagine 181 each bind GTP.

It belongs to the CetZ family.

Its subcellular location is the cytoplasm. Its function is as follows. Involved in cell shape control. The sequence is that of Tubulin-like protein CetZ from Pyrococcus abyssi (strain GE5 / Orsay).